We begin with the raw amino-acid sequence, 241 residues long: Uracil-DNA glycosylase (241 aa).

Asp68 acts as the Proton acceptor in catalysis.

Belongs to the uracil-DNA glycosylase (UDG) superfamily. UNG family.

The protein localises to the cytoplasm. It carries out the reaction Hydrolyzes single-stranded DNA or mismatched double-stranded DNA and polynucleotides, releasing free uracil.. Functionally, excises uracil residues from the DNA which can arise as a result of misincorporation of dUMP residues by DNA polymerase or due to deamination of cytosine. The chain is Uracil-DNA glycosylase from Rhizobium meliloti (strain 1021) (Ensifer meliloti).